A 569-amino-acid polypeptide reads, in one-letter code: Vacuolar protein sorting-associated protein 53 B (569 aa).

Coiled coils occupy residues 53 to 90, 125 to 145, and 295 to 316; these read TRAK…VQDI, QVMT…AINE, and KEKS…FERE.

It belongs to the VPS53 family. Component of the Golgi-associated retrograde protein (GARP) complex.

Its subcellular location is the cytoplasm. The protein resides in the golgi apparatus. The protein localises to the trans-Golgi network membrane. It is found in the endosome membrane. Its function is as follows. Involved in retrograde transport from early and late endosomes to late Golgi, leading to the membrane fusion between late Golgi and endosomal vesicles. The protein is Vacuolar protein sorting-associated protein 53 B of Arabidopsis thaliana (Mouse-ear cress).